Here is a 395-residue protein sequence, read N- to C-terminus: MRIVSGMRPTGKLHLGHYFGVIRNWVKLQEEHECFFFIADWHALTTAYKNTKELRQNIREVMIDWLALGLDPQKSVLFIQSLVKEHAELFLLFGMITPKSWLELNPTYKDLKYNLLRLTDLEKEFKEKLKERISEIVNLIPFNITKEEKFREHLLENLTQTMIEALFEGEIEPEILKRLNVSKRDFYETDTFGFLGYPVLQAADILIYKGEGVPVGEDQLPHIELSREIARRFNRLYGKIFPEPKALLTETPKIPGTDGRKMSKSYGNAVFFSDEKEEVEKKVMKMFTDPQKIRKNDPGRPEICPVFSWHKLFTKDEELVKKIEEDCRAGRLGCVECKRILLKHLEEFLEPIRERRRELEKRINEIEEVFYENSRKAREIAQKTMEEVRKAMNLP.

Residues 8-10 and 16-17 contribute to the ATP site; these read RPT and GH. The 'HIGH' region signature appears at 9-17; that stretch reads PTGKLHLGH. Residues 117–179 form an insert region; it reads RLTDLEKEFK…EIEPEILKRL (63 aa). Asp204 contributes to the L-tryptophan binding site. Residues 216-218, Ile254, and 261-265 contribute to the ATP site; these read GED and KMSKS. The 'KMSKS' region motif lies at 261-265; sequence KMSKS.

It belongs to the class-I aminoacyl-tRNA synthetase family. In terms of assembly, homodimer.

The protein resides in the cytoplasm. It carries out the reaction tRNA(Trp) + L-tryptophan + ATP = L-tryptophyl-tRNA(Trp) + AMP + diphosphate + H(+). Its function is as follows. Catalyzes the attachment of tryptophan to tRNA(Trp). The protein is Tryptophan--tRNA ligase of Aquifex aeolicus (strain VF5).